The following is a 443-amino-acid chain: Mitochondrial enolase superfamily member 1 (443 aa).

Residues 24–26 (GAD) and tyrosine 34 each bind substrate. Serine 148 carries the post-translational modification Phosphoserine. Substrate is bound at residue lysine 220. Residue lysine 222 is the Proton donor/acceptor of the active site. Aspartate 250 is a Mg(2+) binding site. Residues asparagine 252, glutamate 276, glutamate 305, 355 to 357 (HAG), and glutamate 386 contribute to the substrate site. Mg(2+) contacts are provided by glutamate 276 and glutamate 305. The active site involves histidine 355.

It belongs to the mandelate racemase/muconate lactonizing enzyme family. ENOSF1 subfamily. Mg(2+) serves as cofactor. In terms of processing, could be sumoylated.

It is found in the mitochondrion. It catalyses the reaction L-fuconate = 2-dehydro-3-deoxy-L-fuconate + H2O. Its function is as follows. Plays a role in the catabolism of L-fucose, a sugar that is part of the carbohydrates that are attached to cellular glycoproteins. Catalyzes the dehydration of L-fuconate to 2-keto-3-deoxy-L-fuconate by the abstraction of the 2-proton to generate an enediolate intermediate that is stabilized by the magnesium ion. This Homo sapiens (Human) protein is Mitochondrial enolase superfamily member 1 (ENOSF1).